The sequence spans 381 residues: MMRKSLCCALLLGISCSALATPVSEKQLAEVVANTITPLMKAQSVPGMAVAVIYQGKPHYYTFGKADIAANKPVTPQTLFELGSISKTFTGVLGGDAIARGEISLDDAVTRYWPQLTGKQWQGIRMLDLATYTAGGLPLQVPDEVTDNASLLRFYQNWQPQWKPGTTRLYANASIGLFGALAVKPSGMPYEQAMTTRVLKPLKLDHTWINVPKAEEAHYAWGYRDGKAVRVSPGMLDAQAYGVKTNVQDMANWVMANMAPENVADASLKQGIALAQSRYWRIGSMYQGLGWEMLNWPVEANTVVEGSDSKVALAPLPVAEVNPPAPPVKASWVHKTGSTGGFGSYVAFIPEKQIGIVMLANTSYPNPARVEAAYHILEALQ.

The first 20 residues, 1-20, serve as a signal peptide directing secretion; that stretch reads MMRKSLCCALLLGISCSALA. Ser84 functions as the Acyl-ester intermediate in the catalytic mechanism. Tyr170 (proton acceptor) is an active-site residue. Substrate is bound at residue 335-337; sequence KTG.

Belongs to the class-C beta-lactamase family.

Its subcellular location is the periplasm. The enzyme catalyses a beta-lactam + H2O = a substituted beta-amino acid. Functionally, this protein is a serine beta-lactamase with a substrate specificity for cephalosporins. The chain is Beta-lactamase (ampC) from Enterobacter cloacae.